A 167-amino-acid chain; its full sequence is N-alpha-acetyltransferase (167 aa).

Residues 12–167 (FTLRNARMDD…EDAYLMARPL (156 aa)) form the N-acetyltransferase domain. Residue Tyr37 coordinates substrate. Position 88 (His88) interacts with Zn(2+). Acetyl-CoA-binding positions include 92 to 94 (IAV) and 100 to 105 (RKGIAT). Residue Glu127 coordinates Zn(2+). Residues Asn132 and 139-141 (YEK) each bind acetyl-CoA. Residue Tyr154 coordinates substrate.

It belongs to the acetyltransferase family. ARD1 subfamily. Homodimer.

It localises to the cytoplasm. The catalysed reaction is N-terminal L-alanyl-[protein] + acetyl-CoA = N-terminal N(alpha)-acetyl-L-alanyl-[protein] + CoA + H(+). It carries out the reaction N-terminal L-seryl-[protein] + acetyl-CoA = N-terminal N(alpha)-acetyl-L-seryl-[protein] + CoA + H(+). The enzyme catalyses N-terminal L-methionyl-L-leucyl-[protein] + acetyl-CoA = N-terminal N(alpha)-acetyl-L-methionyl-L-leucyl-[protein] + CoA + H(+). It catalyses the reaction N-terminal L-methionyl-L-glutamyl-[protein] + acetyl-CoA = N-terminal N(alpha)-acetyl-L-methionyl-L-glutamyl-[protein] + CoA + H(+). Functionally, displays alpha (N-terminal) acetyltransferase activity. Catalyzes the covalent attachment of an acetyl moiety from acetyl-CoA to the free alpha-amino group at the N-terminus of a protein. NAT is able to acetylate the alpha-amino group of methionine, alanine and serine N-terminal residue substrates, however it has a preference for Ser-N-terminal substrates. The chain is N-alpha-acetyltransferase from Saccharolobus solfataricus (strain ATCC 35092 / DSM 1617 / JCM 11322 / P2) (Sulfolobus solfataricus).